We begin with the raw amino-acid sequence, 600 residues long: MAPSSKSERNSGAGSAGGGPGGTGGKRAVGRRREHVLKQLERVKISGQLSPRLFRKLPPRVCVSLKNIVDEDFLYAGHIFLGFSKCGRYVLSYTSSSGDDDFSFYIYHLYWWEFNVHSKLKLVRQVRLFQDEEIYSDLYLTVCEWPSDASKVIVFGFNTRSANGMLMNMMMMSDENHRDIYISTVAVPPRGRCAACQDASRAHPGDPSAQCLRHGFMLHTKYQVVYPFPTFQPAFQLKKDQVVLLNTSYSLVACAVSVHSAGDSSFCQILYDHTALPPAPPSSPGPWSPEAAPAFPSLGVEVVPAQPSGAPEPSPAIAKAKEFVADIFRRAKEAKGSPLEETRLPSSLGPSSSRCRPSLEPQAPSGEVVPRDSPPAAETTAPEPGYINYTKLHYVLQSGEGTEPEDEFEDDKISLPFVVTDLRGRNLRPMRERTDMQGQYLTVEQLTLDFEYVINEVIRHDATWGHQFCSFSDYDIVILEVCPETNQVLINIGLLLLAFPAPTEEGQLRPKTYHTSLKVAWDLNTGIFETVSVGDLTEVKGQTSGSVWSSYRKSCVDMVMKWLVPESSGRYVNRMTNEALHKGCSLKVLADSERYTWIVL.

A disordered region spans residues 1–29; sequence MAPSSKSERNSGAGSAGGGPGGTGGKRAV. Positions 14 to 27 are enriched in gly residues; the sequence is GSAGGGPGGTGGKR. A Phosphoserine modification is found at serine 50. Positions 193, 196, 211, and 214 each coordinate Zn(2+). Residue serine 314 is modified to Phosphoserine. Positions 334–343 are enriched in basic and acidic residues; sequence AKGSPLEETR. The interval 334-384 is disordered; that stretch reads AKGSPLEETRLPSSLGPSSSRCRPSLEPQAPSGEVVPRDSPPAAETTAPEP. Low complexity-rich tracts occupy residues 344–359 and 374–384; these read LPSS…RPSL and PPAAETTAPEP.

As to quaternary structure, component of the DCX(DCAF15) complex, also named CLR4(DCAF15) complex, composed of DCAF15, DDB1, cullin-4 (CUL4A or CUL4B), DDA1 and RBX1.

The protein operates within protein modification; protein ubiquitination. Functionally, substrate-recognition component of the DCX(DCAF15) complex, a cullin-4-RING E3 ubiquitin-protein ligase complex that mediates ubiquitination and degradation of target proteins. The DCX(DCAF15) complex acts as a regulator of the natural killer (NK) cells effector functions, possibly by mediating ubiquitination and degradation of cohesin subunits SMC1A and SMC3. May play a role in the activation of antigen-presenting cells (APC) and their interaction with NK cells. The protein is DDB1- and CUL4-associated factor 15 of Mus musculus (Mouse).